Reading from the N-terminus, the 1081-residue chain is MVSPPGVLSSLLLLAAMAGGSSQQCSEGRTYSDAIISPNPETIRIMRVSQTFSVGDCTAACCDLLTCDLAWWFEGSCYLVKCMRSENCEPRTTGPIRSYLTFVRRPVQRPGQLLDYGDMMLSRGSPSGAWGDSLEDLRKDLPFLGKDGGPEETTEYSDEYKDLERGLLQPSNQQDPRGSAEYPDWSLLPSNEGGFNATATGDNSAASMEKLQDPTPHPLDQEQLQALNESTWSPTPGHSSISSVWPSSASPLPTEEGLEGEETLQLQEQPSNSSGKEVPMPSHNPSPASLESSPATTEKNSNFTVTPRSRKHSTPTFPTSTVLTGLTPPPWPLSPTASRTVKALAVSAGDNLVLTLPDREAELKASVEPAPPADTTYSYEWSLMSHPVDFQGKIKQENKPTLHLSQLSVGLYAFRVAVSSENAFGEGYVNVTVMPAARVNQPPVAVVSPQTQELSVPLTSALIDGSQSTDDTEIVSYHWEEVDGPFLGEEFPADTPILRLSNLVPGNYTFRLTITDSDGATNSTTASLVIRDAVDYPPVANAGPNQTITLPQNTIILNGNQSSDDHQIVLYEWFAGPGGESKEMVMQGAQTPYLHLSELQEGEYTFQLMVTDSSGQQSTALVAVTVQAENNQAPVAVAGPDKELVFPVQSATLDGSRSSDDHGIVCYHWEHIRGPSAVEMENVDKAIATVTGLQVGIYHFRLTVRDQQGLSSTSTLTVAVKKENNSPPRAQAGGRHVLILPNNSITLDGSRSTDDRGIVSYLWIRDGQSPAAGDVIGGSDHRAALQLTNLVEGVYTFHLLVTDSQGASDSDAATVEVLPDPKKDGLVELILQVGVEQLTEQQKETLVRQLAVLLNVLDSDVKVLKIQAHTDVSTVIVFYVQSGSPFKVLRAAAVARNLHKRLSKEKEAFLLFKVLRVDTAGCLLKCSGHGHCDPITKRCICSQLWMENLIQRYMWDGESNCEWSVFYVAALALTLTLLTGAVSWLCICCCRRRKRTKIRKKTKYTILDSMDEQERMELRPKYGIKHRSTEHNSSLMVSESEFESDQDTLFSRERMERGVLKGSLNGCARNGVSFGYYSKDR.

A signal peptide spans 1 to 22 (MVSPPGVLSSLLLLAAMAGGSS). In terms of domain architecture, MANSC spans 23–99 (QQCSEGRTYS…PRTTGPIRSY (77 aa)). Over 23-964 (QQCSEGRTYS…WDGESNCEWS (942 aa)) the chain is Extracellular. Positions 168–331 (LQPSNQQDPR…VLTGLTPPPW (164 aa)) are disordered. Asn-196 is a glycosylation site (N-linked (GlcNAc...) asparagine). Polar residues-rich tracts occupy residues 197 to 206 (ATATGDNSAA) and 222 to 234 (EQLQ…TWSP). Residue Asn-228 is glycosylated (N-linked (GlcNAc...) asparagine). Over residues 236–255 (PGHSSISSVWPSSASPLPTE) the composition is skewed to low complexity. N-linked (GlcNAc...) asparagine glycosylation is found at Asn-272 and Asn-302. Composition is skewed to polar residues over residues 283-307 (HNPS…TVTP) and 314-324 (TPTFPTSTVLT). PKD domains lie at 345-436 (AVSA…VMPA), 444-533 (VAVV…IRDA), 539-629 (VANA…VQAE), 630-723 (NNQA…VKKE), and 729-820 (RAQA…VLPD). N-linked (GlcNAc...) asparagine glycosylation is found at Asn-430, Asn-507, Asn-522, Asn-545, and Asn-560. Asn-742 carries an N-linked (GlcNAc...) asparagine glycan. A helical membrane pass occupies residues 965–985 (VFYVAALALTLTLLTGAVSWL). Topologically, residues 986-1081 (CICCCRRRKR…VSFGYYSKDR (96 aa)) are cytoplasmic. The Endocytosis signal motif lies at 1004 to 1007 (YTIL). A Phosphoserine modification is found at Ser-1009.

In terms of assembly, homodimer. Interacts with AP2M1; required for clathrin-mediated endocytosis. N-glycosylated. In terms of processing, O-glycosylated. Post-translationally, shedding of the extracellular domain and intramembrane cleavage produce several proteolytic products. The intramembrane cleavage releases a soluble cytoplasmic polypeptide that translocates to the nucleolus.

It is found in the cell membrane. The protein resides in the early endosome membrane. Functionally, involved in neuronal migration during development of the cerebral neocortex. May function in a cell autonomous and a non-cell autonomous manner and play a role in appropriate adhesion between migrating neurons and radial glial fibers. May also regulate growth and differentiation of dendrites. The chain is Dyslexia-associated protein KIAA0319 homolog (Kiaa0319) from Mus musculus (Mouse).